Here is a 411-residue protein sequence, read N- to C-terminus: Branched-chain-amino-acid aminotransferase, cytosolic (411 aa).

Lysine 247 is subject to N6-(pyridoxal phosphate)lysine.

The protein belongs to the class-IV pyridoxal-phosphate-dependent aminotransferase family. Homodimer. Requires pyridoxal 5'-phosphate as cofactor. In terms of processing, the N-terminus is blocked. Brain, low expression in ovary and placenta, but not found in liver, kidney, and skeletal muscle.

Its subcellular location is the cytoplasm. It catalyses the reaction L-leucine + 2-oxoglutarate = 4-methyl-2-oxopentanoate + L-glutamate. The enzyme catalyses L-isoleucine + 2-oxoglutarate = (S)-3-methyl-2-oxopentanoate + L-glutamate. It carries out the reaction L-valine + 2-oxoglutarate = 3-methyl-2-oxobutanoate + L-glutamate. Functionally, catalyzes the first reaction in the catabolism of the essential branched chain amino acids leucine, isoleucine, and valine. The chain is Branched-chain-amino-acid aminotransferase, cytosolic (Bcat1) from Rattus norvegicus (Rat).